We begin with the raw amino-acid sequence, 255 residues long: MISLQETKIAVQNLNFYYEDFHALKNINLRIAKNKVTAFIGPSGCGKSTLLRSFNRMFELYPNQKATGEINLDGENLLTTKMDISLIRAKVGMVFQKPTPFPMSIYDNIAFGVRLFEKLSKEKMNERVEWALTKAALWNEVKDKLHKSGDSLSGGQQQRLCIARGIAIKPSVLLLDEPCSALDPISTMKIEELITELKQDYTVVIVTHNMQQATRCSDYTAFMYLGELVEFGQTQQIFDRPKIQRTEDYIRGKMG.

Residues 9–250 (IAVQNLNFYY…PKIQRTEDYI (242 aa)) enclose the ABC transporter domain. An ATP-binding site is contributed by 41-48 (GPSGCGKS).

It belongs to the ABC transporter superfamily. Phosphate importer (TC 3.A.1.7) family. The complex is composed of two ATP-binding proteins (PstB), two transmembrane proteins (PstC and PstA) and a solute-binding protein (PstS).

It is found in the cell inner membrane. The enzyme catalyses phosphate(out) + ATP + H2O = ADP + 2 phosphate(in) + H(+). Part of the ABC transporter complex PstSACB involved in phosphate import. Responsible for energy coupling to the transport system. In Haemophilus influenzae (strain 86-028NP), this protein is Phosphate import ATP-binding protein PstB.